The following is a 319-amino-acid chain: L-tryptophan isonitrile synthase AmbI1 (319 aa).

Belongs to the isocyanide synthase family.

The catalysed reaction is D-ribulose 5-phosphate + L-tryptophan = (2S)-3-(1H-indol-3-yl)-2-isocyanopropanoate + hydroxyacetone + formaldehyde + phosphate + H2O + H(+). In terms of biological role, involved in the biosynthesis of ambiguines, a family of hapalindole-type alkaloids. Responsible for the synthesis of the isonitrile group on tryptophan using ribulose 5-phosphate as the source of the carbon atom. This is L-tryptophan isonitrile synthase AmbI1 from Fischerella ambigua (strain UTEX 1903).